The following is a 600-amino-acid chain: Mediator of RNA polymerase II transcription subunit 26 (600 aa).

The 78-residue stretch at 10–87 folds into the TFIIS N-terminal domain; sequence QIRDRLLQAI…RSWQKLIEPA (78 aa). Disordered regions lie at residues 99–330, 348–402, and 431–461; these read GATG…RRLE, HQRL…PRDY, and TRQI…ELDK. A compositionally biased stretch (basic and acidic residues) spans 123 to 133; that stretch reads SIHDLKSRNDL. A compositionally biased stretch (polar residues) spans 175–197; sequence PNSSPLPTNGISGSPESFASSLD. Residues 207-218 are compositionally biased toward basic and acidic residues; the sequence is SRLERDENDKHS. The span at 314–324 shows a compositional bias: pro residues; it reads SPLPLAQPSTP. The segment covering 441–461 has biased composition (basic and acidic residues); the sequence is EPVRADSPVHMEQQSRTELDK. A phosphoserine mark is found at Ser-447, Ser-470, and Ser-535.

Belongs to the Mediator complex subunit 26 family. Component of the Mediator complex, which is composed of MED1, MED4, MED6, MED7, MED8, MED9, MED10, MED11, MED12, MED13, MED13L, MED14, MED15, MED16, MED17, MED18, MED19, MED20, MED21, MED22, MED23, MED24, MED25, MED26, MED27, MED29, MED30, MED31, CCNC, CDK8 and CDC2L6/CDK11. The MED12, MED13, CCNC and CDK8 subunits form a distinct module termed the CDK8 module. Mediator containing the CDK8 module is less active than Mediator lacking this module in supporting transcriptional activation. Individual preparations of the Mediator complex lacking one or more distinct subunits have been variously termed ARC, CRSP, DRIP, PC2, SMCC and TRAP. Interacts with CEBPB (when not methylated).

It is found in the nucleus. In terms of biological role, component of the Mediator complex, a coactivator involved in the regulated transcription of nearly all RNA polymerase II-dependent genes. Mediator functions as a bridge to convey information from gene-specific regulatory proteins to the basal RNA polymerase II transcription machinery. Mediator is recruited to promoters by direct interactions with regulatory proteins and serves as a scaffold for the assembly of a functional pre-initiation complex with RNA polymerase II and the general transcription factors. This is Mediator of RNA polymerase II transcription subunit 26 (MED26) from Homo sapiens (Human).